A 367-amino-acid chain; its full sequence is Putative F-box protein At4g10190 (367 aa).

Residues 3 to 53 (KRNIVDLPEDLVMEILARVPTVTLVRLQSTSKRWNVLIEDKRFAEQHFTNA) form the F-box domain.

The protein is Putative F-box protein At4g10190 of Arabidopsis thaliana (Mouse-ear cress).